Reading from the N-terminus, the 324-residue chain is Lipoyl synthase, chloroplastic (324 aa).

Low complexity-rich tracts occupy residues 1–12 and 20–29; these read MCGPTATTVANA and KGLPPGLKKP. Residues 1-30 form a disordered region; the sequence is MCGPTATTVANAGTGGETIKGLPPGLKKPP. [4Fe-4S] cluster-binding residues include cysteine 58, cysteine 63, cysteine 69, cysteine 86, cysteine 90, cysteine 93, and serine 302. In terms of domain architecture, Radical SAM core spans 72 to 291; sequence GDTGTATVML…AYGEEVIGFR (220 aa).

This sequence belongs to the radical SAM superfamily. Lipoyl synthase family. The cofactor is [4Fe-4S] cluster.

The protein resides in the plastid. Its subcellular location is the chloroplast. The catalysed reaction is [[Fe-S] cluster scaffold protein carrying a second [4Fe-4S](2+) cluster] + N(6)-octanoyl-L-lysyl-[protein] + 2 oxidized [2Fe-2S]-[ferredoxin] + 2 S-adenosyl-L-methionine + 4 H(+) = [[Fe-S] cluster scaffold protein] + N(6)-[(R)-dihydrolipoyl]-L-lysyl-[protein] + 4 Fe(3+) + 2 hydrogen sulfide + 2 5'-deoxyadenosine + 2 L-methionine + 2 reduced [2Fe-2S]-[ferredoxin]. Its pathway is protein modification; protein lipoylation via endogenous pathway; protein N(6)-(lipoyl)lysine from octanoyl-[acyl-carrier-protein]: step 2/2. Functionally, catalyzes the radical-mediated insertion of two sulfur atoms into the C-6 and C-8 positions of the octanoyl moiety bound to the lipoyl domains of lipoate-dependent enzymes, thereby converting the octanoylated domains into lipoylated derivatives. The polypeptide is Lipoyl synthase, chloroplastic (Ostreococcus lucimarinus (strain CCE9901)).